The primary structure comprises 233 residues: Defense protein 3 (233 aa).

An N-terminal signal peptide occupies residues 1–17; that stretch reads MFGKFVLLAVLLVGVNS. Residues 18–45 constitute a propeptide that is removed on maturation; that stretch reads RYVIIEDPVYYIEDHELPEQWTSSRVRR.

It belongs to the attacin/sarcotoxin-2 family.

The protein localises to the secreted. Its function is as follows. Has antibacterial activity against both Gram-positive and Gram-negative bacteria. In Lonomia obliqua (Moth), this protein is Defense protein 3.